We begin with the raw amino-acid sequence, 395 residues long: Acetate kinase (395 aa).

Asparagine 8 provides a ligand contact to Mg(2+). Lysine 15 contributes to the ATP binding site. Arginine 89 provides a ligand contact to substrate. Aspartate 146 serves as the catalytic Proton donor/acceptor. Residues histidine 206–glycine 210, aspartate 281–arginine 283, and glycine 329–asparagine 333 contribute to the ATP site. Glutamate 382 provides a ligand contact to Mg(2+).

The protein belongs to the acetokinase family. In terms of assembly, homodimer. Requires Mg(2+) as cofactor. The cofactor is Mn(2+).

The protein resides in the cytoplasm. It carries out the reaction acetate + ATP = acetyl phosphate + ADP. Its pathway is metabolic intermediate biosynthesis; acetyl-CoA biosynthesis; acetyl-CoA from acetate: step 1/2. In terms of biological role, catalyzes the formation of acetyl phosphate from acetate and ATP. Can also catalyze the reverse reaction. The protein is Acetate kinase of Shouchella clausii (strain KSM-K16) (Alkalihalobacillus clausii).